We begin with the raw amino-acid sequence, 571 residues long: MTLIGWFQIALFCAVVLALVKPLGAYMTRVFAGERTILSPLLAPIERGLYRAAGIDARHEQTWLGYGLAMLVFHALGFVSLYAILRLQDGLPLNPMGQAAVAPDLALNTAVSFVTNTNWQNYGGESTLSYLSQMLGLTPQNFLSAATGLALAVALTRGFARASSRTVGSFWVDLTRCTLYVLLPLCIGLTLFYVWQGMPQTLGASVDATTLEGARQTIAVGPVASQVAIKMLGTNGGGFFNANAAHPFENPTALANLVQMVTIFALGAAMTNVFGRMVGDERQGWAILAAMGVLFLAGVAVTYASEAAGSPVLNGLGFSAGNMEGKEIRFGIVASALFAVVTTAASCGAVNAMHDSFTALGGLIPMLNMQLGEIIVGGVGAGLYGMLVFVLVALFVAGLMVGRTPEYLGKKIEAKEVKMAMLAILCLPLMMLGLAALATVLPAGLAGPANAGPHGFSEILYAFTSAAANNGSAFGGLTGNTLFYNTTLALGMAVGRFMVIVPALAIAGSLAAKKTLPASAGTLPTHGGLFVGLLVGVILIVGGLTFFPALALGPVVEHLAGAAGQTFAAGG.

Transmembrane regions (helical) follow at residues Leu-3–Leu-23, Leu-64–Ile-84, Leu-135–Leu-155, Leu-179–Pro-199, Leu-254–Phe-274, Gly-284–Ala-304, Phe-330–Val-350, Phe-357–Val-376, Met-421–Leu-441, Leu-488–Gly-508, and Gly-527–Phe-547.

The protein belongs to the KdpA family. The system is composed of three essential subunits: KdpA, KdpB and KdpC.

The protein localises to the cell inner membrane. Its function is as follows. Part of the high-affinity ATP-driven potassium transport (or Kdp) system, which catalyzes the hydrolysis of ATP coupled with the electrogenic transport of potassium into the cytoplasm. This subunit binds the periplasmic potassium ions and delivers the ions to the membrane domain of KdpB through an intramembrane tunnel. The chain is Potassium-transporting ATPase potassium-binding subunit from Methylorubrum populi (strain ATCC BAA-705 / NCIMB 13946 / BJ001) (Methylobacterium populi).